The sequence spans 318 residues: Ficolin-1-B (318 aa).

A signal peptide spans 1 to 19 (MTRWVQTFLLLVAVIRSYA). The Collagen-like domain maps to 42–99 (GCPGIPGVPGPQGPSGPAGAKGEKGFPGIPGKMGPTGLKGERGISGPKGQKGDKGDPG). The region spanning 100-318 (IPVVGMAQNC…VSEIKFRPQP (219 aa)) is the Fibrinogen C-terminal domain. A disulfide bridge links Cys-109 with Cys-137. N-linked (GlcNAc...) asparagine glycans are attached at residues Asn-205 and Asn-222. Position 253 (Asp-253) interacts with Ca(2+). Asn-254 is a glycosylation site (N-linked (GlcNAc...) asparagine). Residues Asp-255 and Ser-257 each coordinate Ca(2+). Cys-261 and Cys-274 are disulfide-bonded. A carbohydrate is bound at residue 273–275 (SCH). Asn-287 is a glycosylation site (N-linked (GlcNAc...) asparagine).

It belongs to the ficolin lectin family. In terms of assembly, homotrimer. May form higher-order oligomers. N-glycosylated. In terms of tissue distribution, expressed in peripheral blood leukocytes. Also detected at lower levels in spleen and lung.

It is found in the secreted. Its function is as follows. May function in innate immunity through activation of the lectin complement pathway. Binds to GalNAc and GlcNAc carbohydrate moieties. In Xenopus laevis (African clawed frog), this protein is Ficolin-1-B.